Here is a 215-residue protein sequence, read N- to C-terminus: LexA repressor (215 aa).

A DNA-binding region (H-T-H motif) is located at residues 29 to 49 (VREICSAVGFKSTSTVHSYLQ). Catalysis depends on for autocatalytic cleavage activity residues serine 138 and lysine 175.

The protein belongs to the peptidase S24 family. Homodimer.

It carries out the reaction Hydrolysis of Ala-|-Gly bond in repressor LexA.. Represses a number of genes involved in the response to DNA damage (SOS response), including recA and lexA. In the presence of single-stranded DNA, RecA interacts with LexA causing an autocatalytic cleavage which disrupts the DNA-binding part of LexA, leading to derepression of the SOS regulon and eventually DNA repair. This chain is LexA repressor, found in Ruminiclostridium cellulolyticum (strain ATCC 35319 / DSM 5812 / JCM 6584 / H10) (Clostridium cellulolyticum).